The chain runs to 89 residues: Small ribosomal subunit protein uS19 (89 aa).

Belongs to the universal ribosomal protein uS19 family.

Functionally, protein S19 forms a complex with S13 that binds strongly to the 16S ribosomal RNA. This Bacteroides thetaiotaomicron (strain ATCC 29148 / DSM 2079 / JCM 5827 / CCUG 10774 / NCTC 10582 / VPI-5482 / E50) protein is Small ribosomal subunit protein uS19.